The chain runs to 989 residues: Protease PrtH (989 aa).

2 repeats span residues 270–323 (TPTD…KCVN) and 528–581 (SPAS…VCVD). The segment at 969–989 (PRDTPWRYGKRELPPSASGMR) is disordered.

Belongs to the peptidase C25 family.

The protein resides in the cytoplasmic vesicle. Functionally, cleaves human complement component C3. May enable P.gingivalis to evade complement-mediated killing during the immune response. Plays an important role in soft tissue infections and is a virulence factor. The chain is Protease PrtH (prtH) from Porphyromonas gingivalis (strain ATCC BAA-308 / W83).